We begin with the raw amino-acid sequence, 138 residues long: Large ribosomal subunit protein uL16 (138 aa).

A compositionally biased stretch (basic residues) spans M1 to Q13. A disordered region spans residues M1–G24.

This sequence belongs to the universal ribosomal protein uL16 family. In terms of assembly, part of the 50S ribosomal subunit.

Functionally, binds 23S rRNA and is also seen to make contacts with the A and possibly P site tRNAs. The protein is Large ribosomal subunit protein uL16 of Cupriavidus necator (strain ATCC 17699 / DSM 428 / KCTC 22496 / NCIMB 10442 / H16 / Stanier 337) (Ralstonia eutropha).